The sequence spans 171 residues: Dual specificity protein phosphatase OPG106 (171 aa).

Residues 23–171 form the Tyrosine-protein phosphatase domain; that stretch reads SPTIMTRVTN…IIEKYVIDKN (149 aa). Cys-110 serves as the catalytic Phosphocysteine intermediate.

The protein belongs to the protein-tyrosine phosphatase family. Non-receptor class dual specificity subfamily. In terms of assembly, homodimer.

The protein localises to the virion. It localises to the host cytoplasm. The catalysed reaction is O-phospho-L-tyrosyl-[protein] + H2O = L-tyrosyl-[protein] + phosphate. It carries out the reaction O-phospho-L-seryl-[protein] + H2O = L-seryl-[protein] + phosphate. In terms of biological role, serine/tyrosine phosphatase which down-regulates cellular antiviral response by dephosphorylating activated host STAT1 and blocking interferon (IFN)-stimulated innate immune responses. Dephosphorylates the OPG144 protein. The polypeptide is Dual specificity protein phosphatase OPG106 (OPG106) (Homo sapiens (Human)).